Consider the following 179-residue polypeptide: Large ribosomal subunit protein uL6 (179 aa).

The protein belongs to the universal ribosomal protein uL6 family. In terms of assembly, part of the 50S ribosomal subunit.

This protein binds to the 23S rRNA, and is important in its secondary structure. It is located near the subunit interface in the base of the L7/L12 stalk, and near the tRNA binding site of the peptidyltransferase center. The chain is Large ribosomal subunit protein uL6 from Prochlorococcus marinus (strain SARG / CCMP1375 / SS120).